Here is a 226-residue protein sequence, read N- to C-terminus: N-acetyltransferase family 8 member 2 (226 aa).

2 consecutive transmembrane segments (helical) span residues 33-55 (FYHV…TIIL) and 60-82 (WLLA…WVSC). Residues 69–221 (LFLLCLRLIF…FHFTYSLPSV (153 aa)) form the N-acetyltransferase domain. Lys-204 is subject to N6-acetyllysine.

It belongs to the camello family.

Its subcellular location is the membrane. Its function is as follows. Probable acetyltransferase. Has no detectable histone acetyltransferase activity towards histone H3 or H4. In Rattus norvegicus (Rat), this protein is N-acetyltransferase family 8 member 2.